Here is a 666-residue protein sequence, read N- to C-terminus: DEAD-box ATP-dependent RNA helicase 30 (666 aa).

A disordered region spans residues Pro-53–Arg-102. Residues Pro-64 to Pro-76 are compositionally biased toward low complexity. A compositionally biased stretch (basic and acidic residues) spans Glu-80 to Arg-92. The Q motif signature appears at Arg-251 to Ser-279. A Helicase ATP-binding domain is found at Trp-282–Val-457. Ala-295–Thr-302 lines the ATP pocket. The short motif at Asp-405–Asp-408 is the DEAD box element. A Helicase C-terminal domain is found at Arg-485–Ala-630. The segment at Ser-632–Tyr-666 is disordered. Positions Met-636–Asn-651 are enriched in gly residues.

Belongs to the DEAD box helicase family. DDX5/DBP2 subfamily.

It is found in the nucleus. The enzyme catalyses ATP + H2O = ADP + phosphate + H(+). ATP-dependent RNA helicase involved nonsense-mediated mRNA decay and ribosome biogenesis through rRNA processing. This chain is DEAD-box ATP-dependent RNA helicase 30, found in Oryza sativa subsp. japonica (Rice).